The chain runs to 1123 residues: RNA-binding protein 6 (1123 aa).

Disordered regions lie at residues 1 to 391 and 413 to 454; these read MWGD…EGGL and LPGS…EEKP. A Phosphoserine modification is found at serine 17. Lysine 36 participates in a covalent cross-link: Glycyl lysine isopeptide (Lys-Gly) (interchain with G-Cter in SUMO2). The span at 79–97 shows a compositional bias: basic and acidic residues; that stretch reads DGPHGDYRGGEGPGHDFRG. Low complexity predominate over residues 98 to 114; that stretch reads GDFSSSDFQSRDSSQLD. 2 stretches are compositionally biased toward basic and acidic residues: residues 115–131 and 145–237; these read FRGR…REGP and YRGR…DFRG. Serine 240 is modified (phosphoserine). Basic and acidic residues-rich tracts occupy residues 245 to 286 and 301 to 323; these read LDFR…REMP and QDRE…HTIE. Residue lysine 331 forms a Glycyl lysine isopeptide (Lys-Gly) (interchain with G-Cter in SUMO2) linkage. Basic and acidic residues predominate over residues 332 to 354; the sequence is GEFEHSETREGETQGVAFEHESP. The residue at position 344 (threonine 344) is a Phosphothreonine. The span at 356–365 shows a compositional bias: polar residues; it reads DFQNSQSPVQ. Residues serine 360 and serine 362 each carry the phosphoserine modification. Basic and acidic residues-rich tracts occupy residues 366-391 and 431-454; these read DQDK…EGGL and KTAR…EEKP. Glycyl lysine isopeptide (Lys-Gly) (interchain with G-Cter in SUMO2) cross-links involve residues lysine 386, lysine 453, lysine 469, and lysine 569. In terms of domain architecture, RRM spans 456 to 536; the sequence is RLIRLSGVPE…KEVTLEYVSS (81 aa). Disordered stretches follow at residues 574 to 654, 741 to 787, and 827 to 948; these read TYPQ…QDGE, KRRN…QSSS, and EEEI…EEDK. Basic and acidic residues-rich tracts occupy residues 597–654 and 742–754; these read PADK…QDGE and RRND…DHMH. Residues 772–787 show a composition bias toward polar residues; sequence SDWSSDTNRQGQQSSS. Positions 843-860 are enriched in basic and acidic residues; sequence SKKEMSKRDGKEKKDRGV. Glycyl lysine isopeptide (Lys-Gly) (interchain with G-Cter in SUMO2) cross-links involve residues lysine 871, lysine 879, and lysine 887. A Phosphoserine modification is found at serine 891. The span at 910–922 shows a compositional bias: acidic residues; that stretch reads GDSDYEEEEEEEQ. Residues 934-948 show a composition bias toward basic and acidic residues; the sequence is QKREEQTKKENEEDK. Residues lysine 935, lysine 948, lysine 991, and lysine 1019 each participate in a glycyl lysine isopeptide (Lys-Gly) (interchain with G-Cter in SUMO2) cross-link. The span at 1004 to 1051 shows a compositional bias: basic and acidic residues; sequence EREGKFKGRGNDRREKLQSFDSPERKRIKYSRETDSDRKLVDKEDIDT. The tract at residues 1004-1106 is disordered; the sequence is EREGKFKGRG…RTSKRQSNET (103 aa). Serine 1022 and serine 1025 each carry phosphoserine. Residues lysine 1042, lysine 1046, and lysine 1066 each participate in a glycyl lysine isopeptide (Lys-Gly) (interchain with G-Cter in SUMO2) cross-link. In terms of domain architecture, G-patch spans 1051–1097; that stretch reads TSSKGGCVQQATGWRKGTGLGYGHPGLASSEEAEGRMRGPSVGASGR.

As to quaternary structure, may interact with FAM168B. As to expression, ubiquitous in adults.

The protein resides in the nucleus. Specifically binds poly(G) RNA homopolymers in vitro. The chain is RNA-binding protein 6 (RBM6) from Homo sapiens (Human).